Consider the following 199-residue polypeptide: Protein GrpE (199 aa).

Belongs to the GrpE family. As to quaternary structure, homodimer.

The protein localises to the cytoplasm. Participates actively in the response to hyperosmotic and heat shock by preventing the aggregation of stress-denatured proteins, in association with DnaK and GrpE. It is the nucleotide exchange factor for DnaK and may function as a thermosensor. Unfolded proteins bind initially to DnaJ; upon interaction with the DnaJ-bound protein, DnaK hydrolyzes its bound ATP, resulting in the formation of a stable complex. GrpE releases ADP from DnaK; ATP binding to DnaK triggers the release of the substrate protein, thus completing the reaction cycle. Several rounds of ATP-dependent interactions between DnaJ, DnaK and GrpE are required for fully efficient folding. In Fusobacterium nucleatum subsp. nucleatum (strain ATCC 25586 / DSM 15643 / BCRC 10681 / CIP 101130 / JCM 8532 / KCTC 2640 / LMG 13131 / VPI 4355), this protein is Protein GrpE.